The chain runs to 345 residues: Anthranilate phosphoribosyltransferase (345 aa).

Residues glycine 87, 90 to 91 (GD), threonine 95, 97 to 100 (NAST), 115 to 123 (KHGNRSFSS), and serine 127 each bind 5-phospho-alpha-D-ribose 1-diphosphate. Glycine 87 is an anthranilate binding site. Serine 99 is a Mg(2+) binding site. Position 118 (asparagine 118) interacts with anthranilate. Arginine 173 lines the anthranilate pocket. Positions 232 and 233 each coordinate Mg(2+).

Belongs to the anthranilate phosphoribosyltransferase family. In terms of assembly, homodimer. Mg(2+) serves as cofactor.

It carries out the reaction N-(5-phospho-beta-D-ribosyl)anthranilate + diphosphate = 5-phospho-alpha-D-ribose 1-diphosphate + anthranilate. The protein operates within amino-acid biosynthesis; L-tryptophan biosynthesis; L-tryptophan from chorismate: step 2/5. Catalyzes the transfer of the phosphoribosyl group of 5-phosphorylribose-1-pyrophosphate (PRPP) to anthranilate to yield N-(5'-phosphoribosyl)-anthranilate (PRA). This chain is Anthranilate phosphoribosyltransferase, found in Aeropyrum pernix (strain ATCC 700893 / DSM 11879 / JCM 9820 / NBRC 100138 / K1).